A 415-amino-acid chain; its full sequence is Isocitrate dehydrogenase [NADP] 1 (415 aa).

Residue threonine 104 participates in NADP(+) binding. The D-threo-isocitrate site is built by serine 113, asparagine 115, arginine 119, arginine 129, and arginine 153. Aspartate 307 is a Mg(2+) binding site. Residues 339 to 345, asparagine 352, tyrosine 390, and arginine 394 contribute to the NADP(+) site; that span reads HGTAPKY.

The protein belongs to the isocitrate and isopropylmalate dehydrogenases family. In terms of assembly, homodimer. Mg(2+) serves as cofactor. It depends on Mn(2+) as a cofactor.

It carries out the reaction D-threo-isocitrate + NADP(+) = 2-oxoglutarate + CO2 + NADPH. Catalyzes the oxidative decarboxylation of isocitrate to 2-oxoglutarate and carbon dioxide with the concomitant reduction of NADP(+). This Colwellia maris protein is Isocitrate dehydrogenase [NADP] 1.